A 935-amino-acid polypeptide reads, in one-letter code: Isoleucine--tRNA ligase (935 aa).

The 'HIGH' region motif lies at 58–68; that stretch reads PYANGSIHVGH. E558 is an L-isoleucyl-5'-AMP binding site. Positions 599-603 match the 'KMSKS' region motif; it reads KMSKS. ATP is bound at residue K602. The Zn(2+) site is built by C897, C900, C917, and C920.

Belongs to the class-I aminoacyl-tRNA synthetase family. IleS type 1 subfamily. In terms of assembly, monomer. Zn(2+) serves as cofactor.

Its subcellular location is the cytoplasm. The catalysed reaction is tRNA(Ile) + L-isoleucine + ATP = L-isoleucyl-tRNA(Ile) + AMP + diphosphate. Functionally, catalyzes the attachment of isoleucine to tRNA(Ile). As IleRS can inadvertently accommodate and process structurally similar amino acids such as valine, to avoid such errors it has two additional distinct tRNA(Ile)-dependent editing activities. One activity is designated as 'pretransfer' editing and involves the hydrolysis of activated Val-AMP. The other activity is designated 'posttransfer' editing and involves deacylation of mischarged Val-tRNA(Ile). This chain is Isoleucine--tRNA ligase, found in Francisella tularensis subsp. novicida (strain U112).